Consider the following 207-residue polypeptide: Lipid A acyltransferase PagP (207 aa).

Residues 1–24 form the signal peptide; that stretch reads MKFDLTTAYTLSIPLLASSGTVLA. Catalysis depends on residues H79, D122, and S123.

The protein belongs to the lipid A palmitoyltransferase family. Homodimer.

It is found in the cell outer membrane. The enzyme catalyses a lipid A + a 1,2-diacyl-sn-glycero-3-phosphocholine = a hepta-acyl lipid A + a 2-acyl-sn-glycero-3-phosphocholine. It carries out the reaction a lipid IVA + a 1,2-diacyl-sn-glycero-3-phosphocholine = a lipid IVB + a 2-acyl-sn-glycero-3-phosphocholine. It catalyses the reaction a lipid IIA + a 1,2-diacyl-sn-glycero-3-phosphocholine = a lipid IIB + a 2-acyl-sn-glycero-3-phosphocholine. Functionally, transfers a fatty acid residue from the sn-1 position of a phospholipid to the N-linked hydroxyfatty acid chain on the proximal unit of lipid A or its precursors. The sequence is that of Lipid A acyltransferase PagP from Photorhabdus asymbiotica subsp. asymbiotica (strain ATCC 43949 / 3105-77) (Xenorhabdus luminescens (strain 2)).